Consider the following 143-residue polypeptide: Large ribosomal subunit protein uL11 (143 aa).

Belongs to the universal ribosomal protein uL11 family. As to quaternary structure, part of the ribosomal stalk of the 50S ribosomal subunit. Interacts with L10 and the large rRNA to form the base of the stalk. L10 forms an elongated spine to which L12 dimers bind in a sequential fashion forming a multimeric L10(L12)X complex. Post-translationally, one or more lysine residues are methylated.

Functionally, forms part of the ribosomal stalk which helps the ribosome interact with GTP-bound translation factors. The chain is Large ribosomal subunit protein uL11 from Nitrosospira multiformis (strain ATCC 25196 / NCIMB 11849 / C 71).